The chain runs to 249 residues: MSHTLTKLDLPTLQTELENATAQQIITWAAQTFGPGLVMSTSFGIQAAVMLHLVTSIVPNIPVIWIDTGYLPLETYQFADQLTGRLQLNLKVYQSPLSPARMEALYGKLWQQKDVESLNRYDQIRKVEPMQRALKELEAIAWLTGLRRDQTRHRQNLKPVDLQGNQYKVLPILDWNSKMVYEYLTAHDLPYHPFFDQGYVSVGDWHSSRPLMAHDEDERDTRFHGLKQECGLHLPLSPEAGQSLDSSAL.

The active-site Nucleophile; cysteine thiosulfonate intermediate is the Cys-230.

The protein belongs to the PAPS reductase family. CysH subfamily.

The protein resides in the cytoplasm. It carries out the reaction [thioredoxin]-disulfide + sulfite + adenosine 3',5'-bisphosphate + 2 H(+) = [thioredoxin]-dithiol + 3'-phosphoadenylyl sulfate. It functions in the pathway sulfur metabolism; hydrogen sulfide biosynthesis; sulfite from sulfate: step 3/3. Catalyzes the formation of sulfite from phosphoadenosine 5'-phosphosulfate (PAPS) using thioredoxin as an electron donor. In Synechocystis sp. (strain ATCC 27184 / PCC 6803 / Kazusa), this protein is Phosphoadenosine 5'-phosphosulfate reductase.